A 161-amino-acid polypeptide reads, in one-letter code: Ubiquitin-conjugating enzyme 15 (161 aa).

The UBC core domain maps to 15-161 (IACNRLQKEL…TRWWFHDDKV (147 aa)). Cys99 functions as the Glycyl thioester intermediate in the catalytic mechanism.

It belongs to the ubiquitin-conjugating enzyme family.

The catalysed reaction is S-ubiquitinyl-[E1 ubiquitin-activating enzyme]-L-cysteine + [E2 ubiquitin-conjugating enzyme]-L-cysteine = [E1 ubiquitin-activating enzyme]-L-cysteine + S-ubiquitinyl-[E2 ubiquitin-conjugating enzyme]-L-cysteine.. Its pathway is protein modification; protein ubiquitination. Its function is as follows. Accepts the ubiquitin from the E1 complex and catalyzes its covalent attachment to other proteins. This chain is Ubiquitin-conjugating enzyme 15 (UBC15), found in Arabidopsis thaliana (Mouse-ear cress).